The following is a 340-amino-acid chain: tRNA N6-adenosine threonylcarbamoyltransferase (340 aa).

Residues His-111 and His-115 each coordinate Fe cation. Substrate contacts are provided by residues 133–137, Asp-166, Gly-179, Asp-183, and Asn-274; that span reads VVSGG. Position 299 (Asp-299) interacts with Fe cation.

This sequence belongs to the KAE1 / TsaD family. The cofactor is Fe(2+).

Its subcellular location is the cytoplasm. The enzyme catalyses L-threonylcarbamoyladenylate + adenosine(37) in tRNA = N(6)-L-threonylcarbamoyladenosine(37) in tRNA + AMP + H(+). In terms of biological role, required for the formation of a threonylcarbamoyl group on adenosine at position 37 (t(6)A37) in tRNAs that read codons beginning with adenine. Is involved in the transfer of the threonylcarbamoyl moiety of threonylcarbamoyl-AMP (TC-AMP) to the N6 group of A37, together with TsaE and TsaB. TsaD likely plays a direct catalytic role in this reaction. The protein is tRNA N6-adenosine threonylcarbamoyltransferase of Brachyspira hyodysenteriae (strain ATCC 49526 / WA1).